A 229-amino-acid chain; its full sequence is Molybdenum transport system permease protein ModB (229 aa).

The Periplasmic portion of the chain corresponds to M1–K16. The ABC transmembrane type-1 domain maps to V11–L219. A helical transmembrane segment spans residues V17 to V37. Topologically, residues R38 to S49 are cytoplasmic. Residues V50 to M70 form a helical membrane-spanning segment. The Periplasmic segment spans residues G71–W83. Residues F84 to F104 form a helical membrane-spanning segment. Residues P105 to V136 are Cytoplasmic-facing. A helical membrane pass occupies residues F137–F157. The Periplasmic portion of the chain corresponds to A158 to L201. The chain crosses the membrane as a helical span at residues C202 to I222. Topologically, residues S223–R229 are cytoplasmic.

It belongs to the binding-protein-dependent transport system permease family. CysTW subfamily.

The protein resides in the cell inner membrane. Functionally, part of the binding-protein-dependent transport system for molybdenum; probably responsible for the translocation of the substrate across the membrane. The polypeptide is Molybdenum transport system permease protein ModB (modB) (Escherichia coli O157:H7).